We begin with the raw amino-acid sequence, 592 residues long: Aspartate--tRNA(Asp/Asn) ligase (592 aa).

Glu-175 contacts L-aspartate. The segment at Gln-199 to Lys-202 is aspartate. Arg-221 contacts L-aspartate. Residues Arg-221–Glu-223 and Gln-230 each bind ATP. An L-aspartate-binding site is contributed by His-450. Glu-483 contacts ATP. Arg-490 is a binding site for L-aspartate. Residue Gly-535–Arg-538 coordinates ATP.

The protein belongs to the class-II aminoacyl-tRNA synthetase family. Type 1 subfamily. In terms of assembly, homodimer.

Its subcellular location is the cytoplasm. It catalyses the reaction tRNA(Asx) + L-aspartate + ATP = L-aspartyl-tRNA(Asx) + AMP + diphosphate. Aspartyl-tRNA synthetase with relaxed tRNA specificity since it is able to aspartylate not only its cognate tRNA(Asp) but also tRNA(Asn). Reaction proceeds in two steps: L-aspartate is first activated by ATP to form Asp-AMP and then transferred to the acceptor end of tRNA(Asp/Asn). This chain is Aspartate--tRNA(Asp/Asn) ligase, found in Acinetobacter baylyi (strain ATCC 33305 / BD413 / ADP1).